Here is a 338-residue protein sequence, read N- to C-terminus: Holliday junction branch migration complex subunit RuvB (338 aa).

The large ATPase domain (RuvB-L) stretch occupies residues 4–187 (ADKDRLVSGD…FGISEHMAYY (184 aa)). ATP contacts are provided by residues Leu-26, Arg-27, Gly-68, Lys-71, Thr-72, Thr-73, 134-136 (EDF), Arg-177, Tyr-187, and Arg-224. Thr-72 contributes to the Mg(2+) binding site. Residues 188-258 (SADDLSEIVK…MVDHALDQLQ (71 aa)) are small ATPAse domain (RuvB-S). The tract at residues 261 to 338 (QQGLDQIDRK…AHMGMSAEQH (78 aa)) is head domain (RuvB-H). Residues Arg-316 and Arg-321 each coordinate DNA.

The protein belongs to the RuvB family. In terms of assembly, homohexamer. Forms an RuvA(8)-RuvB(12)-Holliday junction (HJ) complex. HJ DNA is sandwiched between 2 RuvA tetramers; dsDNA enters through RuvA and exits via RuvB. An RuvB hexamer assembles on each DNA strand where it exits the tetramer. Each RuvB hexamer is contacted by two RuvA subunits (via domain III) on 2 adjacent RuvB subunits; this complex drives branch migration. In the full resolvosome a probable DNA-RuvA(4)-RuvB(12)-RuvC(2) complex forms which resolves the HJ.

It is found in the cytoplasm. It carries out the reaction ATP + H2O = ADP + phosphate + H(+). The RuvA-RuvB-RuvC complex processes Holliday junction (HJ) DNA during genetic recombination and DNA repair, while the RuvA-RuvB complex plays an important role in the rescue of blocked DNA replication forks via replication fork reversal (RFR). RuvA specifically binds to HJ cruciform DNA, conferring on it an open structure. The RuvB hexamer acts as an ATP-dependent pump, pulling dsDNA into and through the RuvAB complex. RuvB forms 2 homohexamers on either side of HJ DNA bound by 1 or 2 RuvA tetramers; 4 subunits per hexamer contact DNA at a time. Coordinated motions by a converter formed by DNA-disengaged RuvB subunits stimulates ATP hydrolysis and nucleotide exchange. Immobilization of the converter enables RuvB to convert the ATP-contained energy into a lever motion, pulling 2 nucleotides of DNA out of the RuvA tetramer per ATP hydrolyzed, thus driving DNA branch migration. The RuvB motors rotate together with the DNA substrate, which together with the progressing nucleotide cycle form the mechanistic basis for DNA recombination by continuous HJ branch migration. Branch migration allows RuvC to scan DNA until it finds its consensus sequence, where it cleaves and resolves cruciform DNA. In Lacticaseibacillus paracasei (strain ATCC 334 / BCRC 17002 / CCUG 31169 / CIP 107868 / KCTC 3260 / NRRL B-441) (Lactobacillus paracasei), this protein is Holliday junction branch migration complex subunit RuvB.